The primary structure comprises 413 residues: Lipoyl synthase, mitochondrial (413 aa).

Residues 1 to 33 constitute a mitochondrion transit peptide; the sequence is MAAATNRFRALYSSSRVATPQAGSASYLSYRGY. Residues C133, C138, C144, C164, C168, C171, and S379 each contribute to the [4Fe-4S] cluster site. The 222-residue stretch at 147-368 folds into the Radical SAM core domain; that stretch reads GGDKAAATAT…RQRALDMGFL (222 aa).

Belongs to the radical SAM superfamily. Lipoyl synthase family. The cofactor is [4Fe-4S] cluster.

It is found in the mitochondrion. The catalysed reaction is [[Fe-S] cluster scaffold protein carrying a second [4Fe-4S](2+) cluster] + N(6)-octanoyl-L-lysyl-[protein] + 2 oxidized [2Fe-2S]-[ferredoxin] + 2 S-adenosyl-L-methionine + 4 H(+) = [[Fe-S] cluster scaffold protein] + N(6)-[(R)-dihydrolipoyl]-L-lysyl-[protein] + 4 Fe(3+) + 2 hydrogen sulfide + 2 5'-deoxyadenosine + 2 L-methionine + 2 reduced [2Fe-2S]-[ferredoxin]. It participates in protein modification; protein lipoylation via endogenous pathway; protein N(6)-(lipoyl)lysine from octanoyl-[acyl-carrier-protein]: step 2/2. Catalyzes the radical-mediated insertion of two sulfur atoms into the C-6 and C-8 positions of the octanoyl moiety bound to the lipoyl domains of lipoate-dependent enzymes, thereby converting the octanoylated domains into lipoylated derivatives. This chain is Lipoyl synthase, mitochondrial, found in Emericella nidulans (strain FGSC A4 / ATCC 38163 / CBS 112.46 / NRRL 194 / M139) (Aspergillus nidulans).